The chain runs to 168 residues: Fusaric acid resistance protein FusE (168 aa).

Functionally, involved in the resistance (detoxification) of the fungal toxin fusaric acid. This chain is Fusaric acid resistance protein FusE (fusE), found in Burkholderia cepacia (Pseudomonas cepacia).